An 829-amino-acid polypeptide reads, in one-letter code: Transcription activator GutR (829 aa).

A DNA-binding region (H-T-H motif) is located at residues 42–61; sequence IDKIALQLGVSPNTIKSWIG. 200–207 serves as a coordination point for ATP; it reads GWAGMGKT. 3 TPR repeats span residues 697–730, 736–769, and 775–808; these read HRVL…SSTY, IEAY…KHNA, and IYYH…IDSW.

Its function is as follows. Activator of the glucitol dehydrogenase gene (gutB). The protein is Transcription activator GutR (gutR) of Bacillus subtilis (strain 168).